The primary structure comprises 216 residues: Refilin-B (216 aa).

The segment at 1 to 55 (MVGRLSLQDVPELVDTKKKGDGVLDSPDSGLPPSPSPSHWGLAATAGGGGERAPV) is disordered. A phosphoserine mark is found at S6 and S26.

Belongs to the Refilin family. Interacts with FLNA and FLNB. As to expression, detected in various tissues, with highest expression in lung, followed by spleen.

The protein localises to the cytoplasm. It localises to the cytoskeleton. Involved in the regulation of the perinuclear actin network and nuclear shape through interaction with filamins. Plays an essential role in the formation of cartilaginous skeletal elements. The sequence is that of Refilin-B from Mus musculus (Mouse).